A 1888-amino-acid polypeptide reads, in one-letter code: Zinc finger protein 106 (1888 aa).

Residues Arg-5–His-29 form a C2H2-type 1; atypical zinc finger. The C2H2-type 2; atypical zinc finger occupies His-43–His-67. Residues Lys-68 to Lys-187 are disordered. A compositionally biased stretch (acidic residues) spans Glu-75 to Phe-89. 3 stretches are compositionally biased toward basic and acidic residues: residues Asp-90–Glu-108, Ser-118–Ser-138, and Pro-150–Gly-160. Lys-91 is covalently cross-linked (Glycyl lysine isopeptide (Lys-Gly) (interchain with G-Cter in SUMO2)). Lys-155 is covalently cross-linked (Glycyl lysine isopeptide (Lys-Gly) (interchain with G-Cter in SUMO2)). Residues Phe-161–Asn-175 show a composition bias toward polar residues. Glycyl lysine isopeptide (Lys-Gly) (interchain with G-Cter in SUMO2) cross-links involve residues Lys-265 and Lys-309. 2 disordered regions span residues Lys-287–Pro-326 and Arg-338–Arg-362. Over residues Ser-296–Ala-311 the composition is skewed to basic and acidic residues. Residues Thr-342–Asn-357 are compositionally biased toward polar residues. Glycyl lysine isopeptide (Lys-Gly) (interchain with G-Cter in SUMO2) cross-links involve residues Lys-375, Lys-384, Lys-390, Lys-435, Lys-469, and Lys-479. 2 disordered regions span residues Lys-410 to Ile-437 and Thr-453 to Ser-525. A compositionally biased stretch (basic residues) spans Gly-481–Ser-491. The segment covering Leu-507 to Ser-525 has biased composition (polar residues). Residues Lys-524, Lys-534, and Lys-544 each participate in a glycyl lysine isopeptide (Lys-Gly) (interchain with G-Cter in SUMO2) cross-link. A disordered region spans residues Lys-537–His-617. A compositionally biased stretch (polar residues) spans Asn-551–Leu-572. Lys-577 participates in a covalent cross-link: Glycyl lysine isopeptide (Lys-Gly) (interchain with G-Cter in SUMO2). The segment covering Lys-577–Lys-593 has biased composition (basic and acidic residues). A compositionally biased stretch (polar residues) spans Ser-597 to Asp-613. Lys-620 is covalently cross-linked (Glycyl lysine isopeptide (Lys-Gly) (interchain with G-Cter in SUMO2)). Positions Ser-635–Ser-661 are disordered. Positions Gly-644–Ser-661 are enriched in polar residues. A phosphoserine mark is found at Ser-657 and Ser-677. Glycyl lysine isopeptide (Lys-Gly) (interchain with G-Cter in SUMO2) cross-links involve residues Lys-687, Lys-700, Lys-721, Lys-738, Lys-758, Lys-792, and Lys-824. Residues Asn-696–Pro-728 are disordered. Residues Ser-876, Ser-878, Ser-881, and Ser-909 each carry the phosphoserine modification. Residues Thr-894–Gln-920 form a disordered region. A compositionally biased stretch (polar residues) spans Ala-904–Gln-920. Lys-921 participates in a covalent cross-link: Glycyl lysine isopeptide (Lys-Gly) (interchain with G-Cter in SUMO2). Ser-953 carries the post-translational modification Phosphoserine. Residues Ala-968–Gln-986 show a composition bias toward basic and acidic residues. 3 disordered regions span residues Ala-968 to Gln-1064, Glu-1281 to Asp-1461, and Gln-1468 to Leu-1487. The span at Gly-992–Leu-1008 shows a compositional bias: low complexity. A compositionally biased stretch (polar residues) spans Thr-1013–Glu-1022. Thr-1036 carries the post-translational modification Phosphothreonine. A phosphoserine mark is found at Ser-1040, Ser-1041, and Ser-1046. Basic residues predominate over residues Lys-1050–Lys-1060. Polar residues predominate over residues Glu-1281 to Ser-1296. Phosphoserine is present on residues Ser-1291, Ser-1293, and Ser-1296. A Glycyl lysine isopeptide (Lys-Gly) (interchain with G-Cter in SUMO2) cross-link involves residue Lys-1310. Low complexity predominate over residues Ser-1312 to Ser-1321. The residue at position 1313 (Ser-1313) is a Phosphoserine. A Glycyl lysine isopeptide (Lys-Gly) (interchain with G-Cter in SUMO2) cross-link involves residue Lys-1335. Polar residues predominate over residues Gln-1338 to Ser-1354. Phosphoserine is present on Ser-1339. Basic residues predominate over residues Ser-1360–Arg-1373. A Phosphoserine modification is found at Ser-1381. Thr-1383 carries the phosphothreonine modification. Glycyl lysine isopeptide (Lys-Gly) (interchain with G-Cter in SUMO2) cross-links involve residues Lys-1391, Lys-1403, Lys-1406, and Lys-1460. Over residues Gly-1450–Asp-1461 the composition is skewed to basic and acidic residues. A compositionally biased stretch (polar residues) spans Pro-1470–Leu-1487. Ser-1474 is subject to Phosphoserine. Residues Lys-1492 and Lys-1509 each participate in a glycyl lysine isopeptide (Lys-Gly) (interchain with G-Cter in SUMO2) cross-link. The tract at residues Lys-1509–Ser-1531 is disordered. WD repeat units follow at residues Gly-1534–Glu-1573, His-1575–Gln-1618, His-1659–Thr-1700, Gly-1703–Lys-1742, Gly-1743–Val-1780, and Gly-1783–Cys-1820. Lys-1590 participates in a covalent cross-link: Glycyl lysine isopeptide (Lys-Gly) (interchain with G-Cter in SUMO2). Residue Lys-1742 forms a Glycyl lysine isopeptide (Lys-Gly) (interchain with G-Cter in SUMO2) linkage. The C2H2-type 3; atypical zinc-finger motif lies at Tyr-1818–His-1843. Lys-1869 participates in a covalent cross-link: Glycyl lysine isopeptide (Lys-Gly) (interchain with G-Cter in SUMO2).

As to quaternary structure, interacts with KNOP1. Interacts with TARDBP and NUP107. Interacts (via N-terminus) with RBM39. Interacts with the SH3 domains of FYN and GRB2. Phosphorylated by FYN in vitro. Widely expressed, with strongest expression in skeletal muscle, heart and brain (at protein level). Detected in spinal cord motor neurons.

It is found in the nucleus. Its subcellular location is the nucleolus. The protein resides in the nucleus speckle. RNA-binding protein. Specifically binds to 5'-GGGGCC-3' sequence repeats in RNA. Essential for maintenance of peripheral motor neuron and skeletal muscle function. Required for normal expression and/or alternative splicing of a number of genes in spinal cord and skeletal muscle, including the neurite outgrowth inhibitor RTN4. Also contributes to normal mitochondrial respiratory function in motor neurons, via an unknown mechanism. The polypeptide is Zinc finger protein 106 (Znf106) (Mus musculus (Mouse)).